Consider the following 273-residue polypeptide: Putative pyruvate, phosphate dikinase regulatory protein (273 aa).

153–160 provides a ligand contact to ADP; it reads GISRTSKT.

This sequence belongs to the pyruvate, phosphate/water dikinase regulatory protein family. PDRP subfamily.

The catalysed reaction is N(tele)-phospho-L-histidyl/L-threonyl-[pyruvate, phosphate dikinase] + ADP = N(tele)-phospho-L-histidyl/O-phospho-L-threonyl-[pyruvate, phosphate dikinase] + AMP + H(+). It catalyses the reaction N(tele)-phospho-L-histidyl/O-phospho-L-threonyl-[pyruvate, phosphate dikinase] + phosphate + H(+) = N(tele)-phospho-L-histidyl/L-threonyl-[pyruvate, phosphate dikinase] + diphosphate. In terms of biological role, bifunctional serine/threonine kinase and phosphorylase involved in the regulation of the pyruvate, phosphate dikinase (PPDK) by catalyzing its phosphorylation/dephosphorylation. In Rhizobium etli (strain CIAT 652), this protein is Putative pyruvate, phosphate dikinase regulatory protein.